Reading from the N-terminus, the 516-residue chain is GMP synthase [glutamine-hydrolyzing] (516 aa).

A Glutamine amidotransferase type-1 domain is found at 6–198 (KVIIVDYGSQ…LFKIAGIKAD (193 aa)). Cys-83 functions as the Nucleophile in the catalytic mechanism. Catalysis depends on residues His-172 and Glu-174. The 193-residue stretch at 199 to 391 (WSMSSFCERV…LGLPDFIVWR (193 aa)) folds into the GMPS ATP-PPase domain. 227–233 (SGGIDST) is a binding site for ATP.

As to quaternary structure, homodimer.

It catalyses the reaction XMP + L-glutamine + ATP + H2O = GMP + L-glutamate + AMP + diphosphate + 2 H(+). It participates in purine metabolism; GMP biosynthesis; GMP from XMP (L-Gln route): step 1/1. Functionally, catalyzes the synthesis of GMP from XMP. In Oleidesulfovibrio alaskensis (strain ATCC BAA-1058 / DSM 17464 / G20) (Desulfovibrio alaskensis), this protein is GMP synthase [glutamine-hydrolyzing].